A 431-amino-acid chain; its full sequence is Enolase (431 aa).

Residue glutamine 167 coordinates (2R)-2-phosphoglycerate. The active-site Proton donor is the glutamate 209. 3 residues coordinate Mg(2+): aspartate 246, glutamate 289, and aspartate 316. Lysine 341, arginine 370, serine 371, and lysine 392 together coordinate (2R)-2-phosphoglycerate. Lysine 341 acts as the Proton acceptor in catalysis.

It belongs to the enolase family. In terms of assembly, component of the RNA degradosome, a multiprotein complex involved in RNA processing and mRNA degradation. Requires Mg(2+) as cofactor.

The protein localises to the cytoplasm. It is found in the secreted. The protein resides in the cell surface. The enzyme catalyses (2R)-2-phosphoglycerate = phosphoenolpyruvate + H2O. It participates in carbohydrate degradation; glycolysis; pyruvate from D-glyceraldehyde 3-phosphate: step 4/5. In terms of biological role, catalyzes the reversible conversion of 2-phosphoglycerate (2-PG) into phosphoenolpyruvate (PEP). It is essential for the degradation of carbohydrates via glycolysis. The protein is Enolase of Shewanella sediminis (strain HAW-EB3).